Here is a 364-residue protein sequence, read N- to C-terminus: Peptidoglycan transport system permease protein YejB (364 aa).

6 helical membrane passes run 9–29, 134–154, 171–191, 219–239, 283–303, and 325–345; these read LALM…VIQF, SASL…PLGI, IIII…IVLF, IIDY…SAFA, IVIA…SLLI, and YPIV…VGLL. Positions 131–350 constitute an ABC transmembrane type-1 domain; sequence LPVSASLGFW…VVGLLSDLIY (220 aa).

The protein belongs to the binding-protein-dependent transport system permease family. The complex is composed of one ATP-binding protein (YejF), two transmembrane proteins (YejB and YejE) and a solute-binding protein (YepA or YejA).

The protein resides in the cell inner membrane. Functionally, part of the ABC transporter complex YejBEF-YepA involved in the uptake of muropeptides, the breakdown products of cell wall peptidoglycan. The import of muropeptides into the cell enables peptidoglycan recycling, which is vital for cell wall integrity in this bacterium. Is also probably part of the ABC transporter complex YejABEF, which is likely involved in broad-spectrum peptide import. Responsible for the translocation of the substrate across the membrane. The sequence is that of Peptidoglycan transport system permease protein YejB from Agrobacterium fabrum (strain C58 / ATCC 33970) (Agrobacterium tumefaciens (strain C58)).